We begin with the raw amino-acid sequence, 354 residues long: MASLATFQVENDIVDVDSTPQQGFDRDDLYKYDDVEQKAILAAHPWRTDPSYFRNVLVSSIALVKMAMHARSGGAIEVMGMMTGKILPNTFVVMDCYPLPVEGTETRVNAQQEGIEFMVEYLQGLKDVGRRENIVGWYHSHPGYGCWLSGIDVDTQFQNQQFQEPFLAVVVDPNRTISAGKVEIGAFRTYPKDYKPPKKATKQNQDQSVPLSKAKDYGAHSERYYELDVSFFKSSLDENLLQLLWNKNWAATLSQSTIQLNHDYTSKLMLDLSEKNAQLAIGLGEKTPQSQGRGFREAMSKADNEPHTNLLNYSTKGQWEAVNRSVKDGVQIGSDELQGLMSLEIQRRLFGRAK.

Residues 56-193 (VLVSSIALVK…IGAFRTYPKD (138 aa)) form the MPN domain. Histidine 139, histidine 141, and aspartate 152 together coordinate Zn(2+). Positions 139-152 (HSHPGYGCWLSGID) match the JAMM motif motif. Residues 193–212 (DYKPPKKATKQNQDQSVPLS) form a disordered region.

It belongs to the peptidase M67A family. CSN5 subfamily. In terms of assembly, component of the COP9 signalosome (CSN) complex.

It localises to the cytoplasm. The protein localises to the nucleus. Functionally, catalytic Component of the COP9 signalosome (CSN) complex that acts as an regulator of the ubiquitin (Ubl) conjugation pathway by mediating the deneddylation of the cullin subunit of SCF-type E3 ubiquitin-protein ligase complexes. The protein is COP9 signalosome complex subunit 5 (RRI1) of Yarrowia lipolytica (strain CLIB 122 / E 150) (Yeast).